Here is a 212-residue protein sequence, read N- to C-terminus: Adenylate kinase (212 aa).

10–15 contributes to the ATP binding site; the sequence is GAGKGT. The interval 30–59 is NMP; the sequence is STGDMFRAAMANQTEMGTLAKSFIDKGELV. Residues T31, R36, 57-59, 86-89, and Q93 each bind AMP; these read ELV and GYPR. Positions 127–159 are LID; sequence GRIINRKTGETYHKVFNPPADYNEDDYYQREDD. ATP is bound by residues R128 and 137 to 138; that span reads TY. The AMP site is built by R156 and R167. Q195 serves as a coordination point for ATP.

It belongs to the adenylate kinase family. Monomer.

It localises to the cytoplasm. It catalyses the reaction AMP + ATP = 2 ADP. Its pathway is purine metabolism; AMP biosynthesis via salvage pathway; AMP from ADP: step 1/1. Its function is as follows. Catalyzes the reversible transfer of the terminal phosphate group between ATP and AMP. Plays an important role in cellular energy homeostasis and in adenine nucleotide metabolism. The polypeptide is Adenylate kinase (Streptococcus mutans serotype c (strain ATCC 700610 / UA159)).